We begin with the raw amino-acid sequence, 534 residues long: Cytochrome P450 714B1 (534 aa).

A topological domain (lumenal) is located at residue Met-1. Residues 2 to 22 traverse the membrane as a helical; Signal-anchor for type III membrane protein segment; it reads VVVVAAAMAAASLCCGVAAYL. Topologically, residues 23–534 are cytoplasmic; that stretch reads YYVLWLAPER…RSKCDWAGFD (512 aa). Cys-472 is a heme binding site.

It belongs to the cytochrome P450 family. Requires heme as cofactor. In terms of tissue distribution, highly expressed in spikelet and uppermost internode. Detected in shoots, roots, leaves and anthers.

It localises to the membrane. In terms of biological role, catalyzes the 13-hydroxylation of gibberellins (GAs). Determines the ratio of GA4 and GA1. Converts GA12 into GA53. This is Cytochrome P450 714B1 (CYP714B1) from Oryza sativa subsp. japonica (Rice).